The chain runs to 100 residues: uncharacterized protein (100 aa).

This is an uncharacterized protein from Bacillus subtilis (strain 168).